The sequence spans 204 residues: Large ribosomal subunit protein eL15z (204 aa).

Belongs to the eukaryotic ribosomal protein eL15 family.

The polypeptide is Large ribosomal subunit protein eL15z (SB61) (Picea mariana (Black spruce)).